Here is a 266-residue protein sequence, read N- to C-terminus: Glycine--tRNA ligase beta subunit (266 aa).

The protein belongs to the class-II aminoacyl-tRNA synthetase family. In terms of assembly, tetramer of two alpha and two beta subunits.

Its subcellular location is the cytoplasm. The enzyme catalyses tRNA(Gly) + glycine + ATP = glycyl-tRNA(Gly) + AMP + diphosphate. This Moraxella catarrhalis (Branhamella catarrhalis) protein is Glycine--tRNA ligase beta subunit (glyS).